The primary structure comprises 605 residues: Elongation factor 4 (605 aa).

One can recognise a tr-type G domain in the interval 11 to 193; sequence KRIRNFSIIA…RIVTQISPPK (183 aa). Residues 23 to 28 and 140 to 143 contribute to the GTP site; these read DHGKST and NKVD.

It belongs to the TRAFAC class translation factor GTPase superfamily. Classic translation factor GTPase family. LepA subfamily.

Its subcellular location is the cell membrane. The catalysed reaction is GTP + H2O = GDP + phosphate + H(+). In terms of biological role, required for accurate and efficient protein synthesis under certain stress conditions. May act as a fidelity factor of the translation reaction, by catalyzing a one-codon backward translocation of tRNAs on improperly translocated ribosomes. Back-translocation proceeds from a post-translocation (POST) complex to a pre-translocation (PRE) complex, thus giving elongation factor G a second chance to translocate the tRNAs correctly. Binds to ribosomes in a GTP-dependent manner. This chain is Elongation factor 4, found in Phytoplasma australiense.